We begin with the raw amino-acid sequence, 177 residues long: Disulfide bond formation protein B (177 aa).

Topologically, residues 1–14 are cytoplasmic; sequence MLALLKQFSEKRFV. A helical membrane pass occupies residues 15 to 31; it reads WFLLAFSSLALESTALY. The Periplasmic portion of the chain corresponds to 32 to 49; sequence FQYGMGLQPCVLCVYERL. The cysteines at positions 41 and 44 are disulfide-linked. The chain crosses the membrane as a helical span at residues 50–65; the sequence is AMIGLFVAGTIALLQP. At 66 to 72 the chain is on the cytoplasmic side; the sequence is RVFILRL. Residues 73 to 90 form a helical membrane-spanning segment; sequence IALALGLFSSIKGLLISF. Over 91–145 the chain is Periplasmic; sequence RHLDLQMNPAPWKQCEFIPNFPETLPFHQWFPFIFNPTGSCNESQWSLFGLTMVQ. Cys-105 and Cys-131 are disulfide-bonded. Residues 146-164 traverse the membrane as a helical segment; sequence WLVVIFSLYVVILTLLLIA. Topologically, residues 165–177 are cytoplasmic; it reads QVIKTRKQRRLFN.

This sequence belongs to the DsbB family.

Its subcellular location is the cell inner membrane. Required for disulfide bond formation in some periplasmic proteins. Acts by oxidizing the DsbA protein. The chain is Disulfide bond formation protein B from Haemophilus influenzae (strain ATCC 51907 / DSM 11121 / KW20 / Rd).